Reading from the N-terminus, the 200-residue chain is Serine/threonine-protein kinase mos (200 aa).

The 199-residue stretch at 2–200 folds into the Protein kinase domain; sequence LCLLQPLGSG…ELLKGERVTA (199 aa). Residues 8–16 and Lys29 contribute to the ATP site; that span reads LGSGGFGSV. Asp143 functions as the Proton acceptor in the catalytic mechanism.

It belongs to the protein kinase superfamily. Ser/Thr protein kinase family.

It carries out the reaction L-seryl-[protein] + ATP = O-phospho-L-seryl-[protein] + ADP + H(+). The enzyme catalyses L-threonyl-[protein] + ATP = O-phospho-L-threonyl-[protein] + ADP + H(+). The protein is Serine/threonine-protein kinase mos (MOS) of Ciconia nigra (Black stork).